A 1251-amino-acid chain; its full sequence is Immunoglobulin-like and fibronectin type III domain-containing protein 1 (1251 aa).

The 91-residue stretch at 29 to 119 (PDFEQKPVTS…GEAACSVRLT (91 aa)) folds into the Ig-like 1 domain. The interval 61–81 (RWQNSKGDLSDSSKYKISSSP) is disordered. A coiled-coil region spans residues 188 to 221 (IVDYRGMLRRLQEMKKEQEDKMAQYINTISSLRH). In terms of domain architecture, Ig-like 2 spans 309–398 (PRVVVPLAET…SSAWLVVEAG (90 aa)). Over residues 403-433 (LQSTSADHKLQSRRSGKDGRLDIYGERRDAT) the composition is skewed to basic and acidic residues. The disordered stretch occupies residues 403–454 (LQSTSADHKLQSRRSGKDGRLDIYGERRDATRSSTSRYKPGTGSFSKDAQGP). Positions 434–449 (RSSTSRYKPGTGSFSK) are enriched in polar residues. Residues 454–539 (PMGHFSQGLA…GDQQSEATLT (86 aa)) form the Ig-like 3 domain. 3 consecutive Fibronectin type-III domains span residues 646 to 741 (PPQG…VAPE), 746 to 845 (APSA…MRPP), and 847 to 942 (LVRN…AMPV). An Ig-like 4 domain is found at 946-1030 (PKFLVDSSTK…LRTLQGKEVA (85 aa)). The region spanning 1043–1137 (APGPIHLQEN…TSQPWCIPRQ (95 aa)) is the Fibronectin type-III 4 domain. The Ig-like 5 domain maps to 1151–1245 (PDLSQKPRFL…GQAVSTATLI (95 aa)).

As to quaternary structure, interacts with FLNC. Interacts with KY. Expressed in skeletal muscle.

Its subcellular location is the nucleus. It is found in the cytoplasm. The protein localises to the myofibril. It localises to the sarcomere. The protein resides in the z line. The sequence is that of Immunoglobulin-like and fibronectin type III domain-containing protein 1 (IGFN1) from Homo sapiens (Human).